We begin with the raw amino-acid sequence, 143 residues long: Large ribosomal subunit protein uL11 (143 aa).

It belongs to the universal ribosomal protein uL11 family. As to quaternary structure, part of the ribosomal stalk of the 50S ribosomal subunit. Interacts with L10 and the large rRNA to form the base of the stalk. L10 forms an elongated spine to which L12 dimers bind in a sequential fashion forming a multimeric L10(L12)X complex. One or more lysine residues are methylated.

In terms of biological role, forms part of the ribosomal stalk which helps the ribosome interact with GTP-bound translation factors. In Paraburkholderia phymatum (strain DSM 17167 / CIP 108236 / LMG 21445 / STM815) (Burkholderia phymatum), this protein is Large ribosomal subunit protein uL11.